A 170-amino-acid chain; its full sequence is Bacilliredoxin SRU_1493 (170 aa).

The tract at residues 140-170 (CGDEEPPADAPSRPDPSSSGEGLPSTFQSIT) is disordered.

It belongs to the bacilliredoxin family.

In Salinibacter ruber (strain DSM 13855 / M31), this protein is Bacilliredoxin SRU_1493.